The primary structure comprises 349 residues: MKDIGIVGYGSYIPKYRIKVEEIAKVWGKDPEAIKKGLVVNEKSVPSPDEDTATIAVEAARNAVKRAGINAEKIGAVYVGSESHPYAVKPTSATVAEAIGATPDLTAADLEFACKAGTAGIQMCMGLVGSGLIEYGMAIGADTAQGAPGDALEYTASAGGAAYIIGNKKDEMIAVFNGTYSYTTDTPDFWRREGQSYPKHGGRFTGEPAYFKHVLNAAKGIMEKMGTTVKDYDYCVFHQPNGKFYIKAAKSLGFTNEQYKYGLLTPYLGNTYSGAVPLGLSNILDHAEEGARILAVSYGSGAGSDAFDITVTERIKEVVDKAPKTLDLLNRKKYIDYAVYVKYRGKIKI.

Asp30 serves as a coordination point for (3S)-3-hydroxy-3-methylglutaryl-CoA. Residue Glu82 is the Proton donor/acceptor of the active site. Cys114 lines the (3S)-3-hydroxy-3-methylglutaryl-CoA pocket. The Acyl-thioester intermediate role is filled by Cys114. Residue Arg203 coordinates CoA. (3S)-3-hydroxy-3-methylglutaryl-CoA is bound by residues Thr205 and His238. His238 (proton donor/acceptor) is an active-site residue. Lys243 serves as a coordination point for CoA. Positions 247, 270, and 300 each coordinate (3S)-3-hydroxy-3-methylglutaryl-CoA.

It belongs to the thiolase-like superfamily. Archaeal HMG-CoA synthase family. In terms of assembly, interacts with acetoacetyl-CoA thiolase that catalyzes the precedent step in the pathway and with a DUF35 protein. The acetoacetyl-CoA thiolase/HMG-CoA synthase complex channels the intermediate via a fused CoA-binding site, which allows for efficient coupling of the endergonic thiolase reaction with the exergonic HMGCS reaction.

It catalyses the reaction acetoacetyl-CoA + acetyl-CoA + H2O = (3S)-3-hydroxy-3-methylglutaryl-CoA + CoA + H(+). The protein operates within metabolic intermediate biosynthesis; (R)-mevalonate biosynthesis; (R)-mevalonate from acetyl-CoA: step 2/3. Functionally, catalyzes the condensation of acetyl-CoA with acetoacetyl-CoA to form 3-hydroxy-3-methylglutaryl-CoA (HMG-CoA). Functions in the mevalonate (MVA) pathway leading to isopentenyl diphosphate (IPP), a key precursor for the biosynthesis of isoprenoid compounds that are building blocks of archaeal membrane lipids. The protein is Hydroxymethylglutaryl-CoA synthase of Methanothermococcus thermolithotrophicus (Methanococcus thermolithotrophicus).